The following is a 339-amino-acid chain: 4-hydroxy-2-oxovalerate aldolase (339 aa).

The Pyruvate carboxyltransferase domain occupies 7-259 (VILHDMSLRD…QSGIDLYKIM (253 aa)). A substrate-binding site is contributed by 15–16 (RD). Aspartate 16 provides a ligand contact to Mn(2+). The Proton acceptor role is filled by histidine 19. Substrate-binding residues include serine 169 and histidine 198. Mn(2+)-binding residues include histidine 198 and histidine 200. Tyrosine 289 lines the substrate pocket.

The protein belongs to the 4-hydroxy-2-oxovalerate aldolase family.

The catalysed reaction is (S)-4-hydroxy-2-oxopentanoate = acetaldehyde + pyruvate. This is 4-hydroxy-2-oxovalerate aldolase from Marinomonas sp. (strain MWYL1).